Here is a 115-residue protein sequence, read N- to C-terminus: MDPQTQNTSLQRLQNVENRVVKVLELAGGVMEELASPSGPKKEFVNSHCREFMQSMKDIQVTLREEIKSACEYRPFEKCDYNARIANEICFQKLEYVLTQLEDLKQTADRYPSSD.

Belongs to the Mediator complex subunit 11 family. In terms of assembly, component of the Mediator complex.

Its subcellular location is the nucleus. In terms of biological role, component of the Mediator complex, a coactivator involved in the regulated transcription of nearly all RNA polymerase II-dependent genes. Mediator functions as a bridge to convey information from gene-specific regulatory proteins to the basal RNA polymerase II transcription machinery. The Mediator complex, having a compact conformation in its free form, is recruited to promoters by direct interactions with regulatory proteins and serves for the assembly of a functional pre-initiation complex with RNA polymerase II and the general transcription factors. The protein is Mediator of RNA polymerase II transcription subunit 11 (MED11) of Arabidopsis thaliana (Mouse-ear cress).